The primary structure comprises 752 residues: MTAGSVCVPQIIPLRVPQPGKANHEIDNNTLLEMKSDTPDVNIYYTLDGSKPEFLKRIGYGENNTFKYIKPITLPDGKIQVKAIAVSKDCRQSGIVTKVFHVDYEPPNIVSPEDNVENVLKDSSRQEFKNGFVGSKLKKKYKNSENQRSWNVNLRKFPESPLEIPAYGGGSGSRPPTRQSQSPGFAHVSGQKCLTSTEIMRIQRETDFLKCAHCLAPRPSDPFARFCQECGSPVPPIFGCRLPPPEGAQMGLCAECRSLVPMNTPICVVCEAPLALQLQPQASLHLKEKVICRACGTGNPAHLRYCVTCEGALPSSQESMCSGDKAPPPPTQKGGTISCYRCGRWNLWEASFCGWCGAMLGIPAGCSVCPKCGASNHLSARFCGSCGICVKSLVKLSLDRSLALAAEEPRPFSESLNIPLPRSDVGTKRDIGTQTVGLFYPSGKLLAKKEQELASQKQRQEKMSDHKPLLTAISPGRGYWRRQLDHISAHLRCYAQNNPEFRALIAEPRMGKLISATVHEDGCEVSIRLNYSQVSNKNLYLNKAVNFSDHLLSSAAEGDGGLCGSRSSWVSDYSQSTSDTIEKIKRIKNFKTKTFQEKKEQLIPENRLLLKEVGPTGEGRVSVIEQLLDEGADPNCCDEDNRPVITVAVMNKHHEAIPVLVQRGADIDQQWGPLRNTALHEATLLGLAGRESTATLLGCNASIQKKNAGGQTAYDLALNTGDDLVTSLFAAKFGQGLEDQLAQTRSLSLDDC.

Phosphoserine is present on residues S160 and S182. The disordered stretch occupies residues 164-187 (IPAYGGGSGSRPPTRQSQSPGFAH). The span at 174 to 183 (RPPTRQSQSP) shows a compositional bias: polar residues. 2 DZANK-type zinc fingers span residues 211–270 (CAHC…CVVC) and 339–387 (CYRC…GSCG). ANK repeat units follow at residues 605–636 (ENRL…DPNC) and 640–669 (DNRP…DIDQ).

As to quaternary structure, interacts with NINL isoform 2. Associates with DYNC1H1 and multiple dynein intermediate and light chains as well as actin-binding proteins.

It localises to the cytoplasm. The protein localises to the cytoskeleton. Its subcellular location is the microtubule organizing center. It is found in the centrosome. The protein resides in the cilium basal body. Involved in vesicle transport in photoreceptor cells. In Homo sapiens (Human), this protein is Double zinc ribbon and ankyrin repeat-containing protein 1.